The following is a 347-amino-acid chain: Gentisate 1,2 dioxygenase 1 (347 aa).

The 68-residue stretch at 96–163 (LQLILPGEVA…DSDKPMIWMD (68 aa)) folds into the Cupin type-2 domain.

This sequence belongs to the gentisate 1,2-dioxygenase family. Homotetramer. The cofactor is Fe(2+).

The catalysed reaction is 2,5-dihydroxybenzoate + O2 = 3-maleylpyruvate + H(+). Completely inhibited by the presence of 5 mM Cu(2+). Partially inhibited with 5 mM Mn(2+), Zn(2+) or EDTA. Involved in the degradation of gentisate. Catalyzes the conversion of gentisate (2,5-dihydroxybenzoate) to maleylpyruvate. Exhibits broad substrate specificities towards alkyl and halogenated gentisates. The sequence is that of Gentisate 1,2 dioxygenase 1 from Aquipseudomonas alcaligenes (Pseudomonas alcaligenes).